The primary structure comprises 195 residues: Holliday junction branch migration complex subunit RuvA (195 aa).

Positions 1–62 are domain I; it reads MIEFVKGPVA…EDQQTLYGFR (62 aa). The segment at 63 to 141 is domain II; the sequence is SRRERELFNK…ELAPDYVPNE (79 aa). The flexible linker stretch occupies residues 141–145; the sequence is EGLFA. The segment at 146–195 is domain III; the sequence is QGASELDEACEALVALGYSEREIAKVRKALSGEILTTDAYIKRALQLLLK.

It belongs to the RuvA family. In terms of assembly, homotetramer. Forms an RuvA(8)-RuvB(12)-Holliday junction (HJ) complex. HJ DNA is sandwiched between 2 RuvA tetramers; dsDNA enters through RuvA and exits via RuvB. An RuvB hexamer assembles on each DNA strand where it exits the tetramer. Each RuvB hexamer is contacted by two RuvA subunits (via domain III) on 2 adjacent RuvB subunits; this complex drives branch migration. In the full resolvosome a probable DNA-RuvA(4)-RuvB(12)-RuvC(2) complex forms which resolves the HJ.

Its subcellular location is the cytoplasm. The RuvA-RuvB-RuvC complex processes Holliday junction (HJ) DNA during genetic recombination and DNA repair, while the RuvA-RuvB complex plays an important role in the rescue of blocked DNA replication forks via replication fork reversal (RFR). RuvA specifically binds to HJ cruciform DNA, conferring on it an open structure. The RuvB hexamer acts as an ATP-dependent pump, pulling dsDNA into and through the RuvAB complex. HJ branch migration allows RuvC to scan DNA until it finds its consensus sequence, where it cleaves and resolves the cruciform DNA. The chain is Holliday junction branch migration complex subunit RuvA from Exiguobacterium sp. (strain ATCC BAA-1283 / AT1b).